The primary structure comprises 365 residues: Caffeic acid 3-O-methyltransferase (365 aa).

A (E)-ferulate-binding site is contributed by Asn133. Gly210, Asp233, Asp253, Met254, Met266, and Lys267 together coordinate S-adenosyl-L-homocysteine. The active-site Proton acceptor is the His271. Residue Asp272 coordinates (E)-5-hydroxyferulate.

This sequence belongs to the class I-like SAM-binding methyltransferase superfamily. Cation-independent O-methyltransferase family. COMT subfamily. As to quaternary structure, homodimer.

The enzyme catalyses (E)-caffeate + S-adenosyl-L-methionine = (E)-ferulate + S-adenosyl-L-homocysteine + H(+). It catalyses the reaction (E)-5-hydroxyferulate + S-adenosyl-L-methionine = (E)-sinapate + S-adenosyl-L-homocysteine + H(+). Its pathway is aromatic compound metabolism; phenylpropanoid biosynthesis. Inhibited by Cu(2+), and to a lesser extent by Ni(2+), Mn(2+), Co(2+), Fe(3+) and Zn(2+). Unaffected by Fe(2+) and Mg(2+). Catalyzes the conversion of caffeic acid to ferulic acid and of 5-hydroxyferulic acid to sinapic acid. The resulting products may subsequently be converted to the corresponding alcohols that are incorporated into lignins. The sequence is that of Caffeic acid 3-O-methyltransferase from Ammi majus (Bishop's weed).